We begin with the raw amino-acid sequence, 324 residues long: Phospho-N-acetylmuramoyl-pentapeptide-transferase (324 aa).

Transmembrane regions (helical) follow at residues 5-25 (GLLV…PLFI), 52-72 (PTMG…IMAI), 77-97 (LGAE…IGFL), 122-142 (VIAI…YIMI), 149-169 (FELG…GSNA), 176-196 (LDGL…IIAV), 201-221 (FGVA…LVFN), 227-247 (VFMG…VAIL), 253-273 (LLVI…IQVI), and 302-322 (VVVT…YIGV).

Belongs to the glycosyltransferase 4 family. MraY subfamily. Mg(2+) is required as a cofactor.

It localises to the cell membrane. The enzyme catalyses UDP-N-acetyl-alpha-D-muramoyl-L-alanyl-gamma-D-glutamyl-meso-2,6-diaminopimeloyl-D-alanyl-D-alanine + di-trans,octa-cis-undecaprenyl phosphate = di-trans,octa-cis-undecaprenyl diphospho-N-acetyl-alpha-D-muramoyl-L-alanyl-D-glutamyl-meso-2,6-diaminopimeloyl-D-alanyl-D-alanine + UMP. The protein operates within cell wall biogenesis; peptidoglycan biosynthesis. In terms of biological role, catalyzes the initial step of the lipid cycle reactions in the biosynthesis of the cell wall peptidoglycan: transfers peptidoglycan precursor phospho-MurNAc-pentapeptide from UDP-MurNAc-pentapeptide onto the lipid carrier undecaprenyl phosphate, yielding undecaprenyl-pyrophosphoryl-MurNAc-pentapeptide, known as lipid I. The chain is Phospho-N-acetylmuramoyl-pentapeptide-transferase from Bacillus mycoides (strain KBAB4) (Bacillus weihenstephanensis).